The following is a 251-amino-acid chain: tRNA pseudouridine synthase A (251 aa).

The Nucleophile role is filled by D54. Y111 is a binding site for substrate.

Belongs to the tRNA pseudouridine synthase TruA family. Homodimer.

The enzyme catalyses uridine(38/39/40) in tRNA = pseudouridine(38/39/40) in tRNA. Its function is as follows. Formation of pseudouridine at positions 38, 39 and 40 in the anticodon stem and loop of transfer RNAs. This Mycoplasma mycoides subsp. mycoides SC (strain CCUG 32753 / NCTC 10114 / PG1) protein is tRNA pseudouridine synthase A.